We begin with the raw amino-acid sequence, 350 residues long: UDP-3-O-acylglucosamine N-acyltransferase (350 aa).

The active-site Proton acceptor is histidine 251.

It belongs to the transferase hexapeptide repeat family. LpxD subfamily. In terms of assembly, homotrimer.

It carries out the reaction a UDP-3-O-[(3R)-3-hydroxyacyl]-alpha-D-glucosamine + a (3R)-hydroxyacyl-[ACP] = a UDP-2-N,3-O-bis[(3R)-3-hydroxyacyl]-alpha-D-glucosamine + holo-[ACP] + H(+). It participates in bacterial outer membrane biogenesis; LPS lipid A biosynthesis. Catalyzes the N-acylation of UDP-3-O-acylglucosamine using 3-hydroxyacyl-ACP as the acyl donor. Is involved in the biosynthesis of lipid A, a phosphorylated glycolipid that anchors the lipopolysaccharide to the outer membrane of the cell. The protein is UDP-3-O-acylglucosamine N-acyltransferase of Prochlorococcus marinus (strain NATL2A).